The following is a 171-amino-acid chain: Shikimate kinase (171 aa).

13–18 (GVGKST) contacts ATP. Mg(2+) is bound at residue Ser17. Residues Asp35, Arg59, and Gly81 each coordinate substrate. Arg118 contacts ATP. Arg136 contributes to the substrate binding site. Position 153 (Arg153) interacts with ATP.

This sequence belongs to the shikimate kinase family. Monomer. Requires Mg(2+) as cofactor.

It is found in the cytoplasm. The catalysed reaction is shikimate + ATP = 3-phosphoshikimate + ADP + H(+). The protein operates within metabolic intermediate biosynthesis; chorismate biosynthesis; chorismate from D-erythrose 4-phosphate and phosphoenolpyruvate: step 5/7. Catalyzes the specific phosphorylation of the 3-hydroxyl group of shikimic acid using ATP as a cosubstrate. The protein is Shikimate kinase of Streptomyces coelicolor (strain ATCC BAA-471 / A3(2) / M145).